The chain runs to 232 residues: Small ribosomal subunit protein uS2 (232 aa).

This sequence belongs to the universal ribosomal protein uS2 family.

This is Small ribosomal subunit protein uS2 from Natranaerobius thermophilus (strain ATCC BAA-1301 / DSM 18059 / JW/NM-WN-LF).